The chain runs to 232 residues: MAKGHKSKLQSDALRQYILETSVYPREPESMKELREVTAKHPWNLMRTSADEGQFLNMSLKLINAKNTMEIGVYTDYSLLATALAIPDDGKILAMDINRENYEIGLPKIEKAGVAHRIQFREGPALPVLDQLVEDKKNHGTYDFIFVDADKDNYINYHKRIIDLVKVGGLIGYDNTLWNGSVVGPPDAPMRKYLRYCRDFVLELIKALAVDPRIEICMLPVGDGITLSRRIT.

Residue Lys6 coordinates substrate. Residues Thr48, Glu70, 72–73, Ser78, Asp96, and Ala125 contribute to the S-adenosyl-L-methionine site; that span reads GV. A substrate-binding site is contributed by Asp148. Asp148 serves as a coordination point for a divalent metal cation. Asp150 is an S-adenosyl-L-methionine binding site. 2 residues coordinate a divalent metal cation: Asp174 and Asn175. Asn179 serves as a coordination point for substrate.

Belongs to the class I-like SAM-binding methyltransferase superfamily. Cation-dependent O-methyltransferase family. CCoAMT subfamily. Requires a divalent metal cation as cofactor.

The catalysed reaction is (E)-caffeoyl-CoA + S-adenosyl-L-methionine = (E)-feruloyl-CoA + S-adenosyl-L-homocysteine + H(+). It functions in the pathway aromatic compound metabolism; phenylpropanoid biosynthesis. Functionally, methylates caffeoyl-CoA to feruloyl-CoA and 5-hydroxyferuloyl-CoA to sinapoyl-CoA. Plays a role in the synthesis of feruloylated polysaccharides. Involved in the reinforcement of the plant cell wall. Also involved in the responding to wounding or pathogen challenge by the increased formation of cell wall-bound ferulic acid polymers. This Citrus natsudaidai (Natsudaidai orange) protein is Caffeoyl-CoA O-methyltransferase.